Here is a 194-residue protein sequence, read N- to C-terminus: Protein GrpE (194 aa).

Residues 1 to 12 (MSSKEQNTPNEQ) show a composition bias toward polar residues. The segment at 1–39 (MSSKEQNTPNEQASDEIETEQAKNQGADTAAEAADQRDE) is disordered.

This sequence belongs to the GrpE family. Homodimer.

The protein resides in the cytoplasm. Its function is as follows. Participates actively in the response to hyperosmotic and heat shock by preventing the aggregation of stress-denatured proteins, in association with DnaK and GrpE. It is the nucleotide exchange factor for DnaK and may function as a thermosensor. Unfolded proteins bind initially to DnaJ; upon interaction with the DnaJ-bound protein, DnaK hydrolyzes its bound ATP, resulting in the formation of a stable complex. GrpE releases ADP from DnaK; ATP binding to DnaK triggers the release of the substrate protein, thus completing the reaction cycle. Several rounds of ATP-dependent interactions between DnaJ, DnaK and GrpE are required for fully efficient folding. This Erwinia tasmaniensis (strain DSM 17950 / CFBP 7177 / CIP 109463 / NCPPB 4357 / Et1/99) protein is Protein GrpE.